The primary structure comprises 124 residues: Small ribosomal subunit protein uS12 (124 aa).

Asp-89 bears the 3-methylthioaspartic acid mark.

It belongs to the universal ribosomal protein uS12 family. Part of the 30S ribosomal subunit. Contacts proteins S8 and S17. May interact with IF1 in the 30S initiation complex.

With S4 and S5 plays an important role in translational accuracy. Functionally, interacts with and stabilizes bases of the 16S rRNA that are involved in tRNA selection in the A site and with the mRNA backbone. Located at the interface of the 30S and 50S subunits, it traverses the body of the 30S subunit contacting proteins on the other side and probably holding the rRNA structure together. The combined cluster of proteins S8, S12 and S17 appears to hold together the shoulder and platform of the 30S subunit. This is Small ribosomal subunit protein uS12 from Buchnera aphidicola subsp. Cinara cedri (strain Cc).